The following is a 313-amino-acid chain: Small ribosomal subunit protein uS2 (313 aa).

A disordered region spans residues alanine 281 to glutamate 301.

It belongs to the universal ribosomal protein uS2 family.

The chain is Small ribosomal subunit protein uS2 from Caulobacter sp. (strain K31).